The chain runs to 42 residues: Photosystem II reaction center protein J (42 aa).

A helical transmembrane segment spans residues 10–30 (IPLWLVGTVAGILVLGLVGLF).

It belongs to the PsbJ family. In terms of assembly, PSII is composed of 1 copy each of membrane proteins PsbA, PsbB, PsbC, PsbD, PsbE, PsbF, PsbH, PsbI, PsbJ, PsbK, PsbL, PsbM, PsbT, PsbX, PsbY, PsbZ, Psb30/Ycf12, at least 3 peripheral proteins of the oxygen-evolving complex and a large number of cofactors. It forms dimeric complexes.

The protein localises to the plastid. The protein resides in the chloroplast thylakoid membrane. In terms of biological role, one of the components of the core complex of photosystem II (PSII). PSII is a light-driven water:plastoquinone oxidoreductase that uses light energy to abstract electrons from H(2)O, generating O(2) and a proton gradient subsequently used for ATP formation. It consists of a core antenna complex that captures photons, and an electron transfer chain that converts photonic excitation into a charge separation. This chain is Photosystem II reaction center protein J, found in Staurastrum punctulatum (Green alga).